Consider the following 605-residue polypeptide: Elongation factor 4 (605 aa).

The tr-type G domain maps to Ser-9–Ala-192. GTP is bound by residues Asp-21 to Thr-26 and Asn-139 to Asp-142.

This sequence belongs to the TRAFAC class translation factor GTPase superfamily. Classic translation factor GTPase family. LepA subfamily.

It is found in the cell inner membrane. The catalysed reaction is GTP + H2O = GDP + phosphate + H(+). Required for accurate and efficient protein synthesis under certain stress conditions. May act as a fidelity factor of the translation reaction, by catalyzing a one-codon backward translocation of tRNAs on improperly translocated ribosomes. Back-translocation proceeds from a post-translocation (POST) complex to a pre-translocation (PRE) complex, thus giving elongation factor G a second chance to translocate the tRNAs correctly. Binds to ribosomes in a GTP-dependent manner. The protein is Elongation factor 4 of Chlorobium luteolum (strain DSM 273 / BCRC 81028 / 2530) (Pelodictyon luteolum).